Reading from the N-terminus, the 236-residue chain is SPbeta prophage-derived uncharacterized protein YomV (236 aa).

The chain is SPbeta prophage-derived uncharacterized protein YomV (yomV) from Bacillus subtilis (strain 168).